A 212-amino-acid chain; its full sequence is Leucine efflux protein (212 aa).

A run of 6 helical transmembrane segments spans residues 12-32, 49-69, 71-91, 122-142, 153-173, and 188-208; these read TYLVGAIFIVLVPGPNTLFVL, GVFIGDAVLMFLAWAGVATLI, TTPILFNIVRYLGAFYLLYLG, ILSLTNPKAILFYVSFFVQFI, FFILATTLELVSFCYLSFLII, and LAKVGNSLIGLMFVGFAARLA.

Belongs to the Rht family.

The protein localises to the cell inner membrane. The catalysed reaction is L-leucine(in) + H(+)(out) = L-leucine(out) + H(+)(in). Functionally, exporter of leucine. This chain is Leucine efflux protein (leuE), found in Escherichia coli O6:K15:H31 (strain 536 / UPEC).